Consider the following 271-residue polypeptide: Urease accessory protein UreD (271 aa).

Belongs to the UreD family. As to quaternary structure, ureD, UreF and UreG form a complex that acts as a GTP-hydrolysis-dependent molecular chaperone, activating the urease apoprotein by helping to assemble the nickel containing metallocenter of UreC. The UreE protein probably delivers the nickel.

The protein resides in the cytoplasm. Required for maturation of urease via the functional incorporation of the urease nickel metallocenter. This chain is Urease accessory protein UreD, found in Mycolicibacterium smegmatis (strain ATCC 700084 / mc(2)155) (Mycobacterium smegmatis).